Consider the following 353-residue polypeptide: Sulfate/thiosulfate import ATP-binding protein CysA (353 aa).

The region spanning 3-237 (IQVKNIEKHF…PATPFVFDFL (235 aa)) is the ABC transporter domain. 35-42 (GPSGCGKT) lines the ATP pocket.

Belongs to the ABC transporter superfamily. Sulfate/tungstate importer (TC 3.A.1.6) family. As to quaternary structure, the complex is composed of two ATP-binding proteins (CysA), two transmembrane proteins (CysT and CysW) and a solute-binding protein (CysP).

It localises to the cell inner membrane. The catalysed reaction is sulfate(out) + ATP + H2O = sulfate(in) + ADP + phosphate + H(+). It catalyses the reaction thiosulfate(out) + ATP + H2O = thiosulfate(in) + ADP + phosphate + H(+). Its function is as follows. Part of the ABC transporter complex CysAWTP involved in sulfate/thiosulfate import. Responsible for energy coupling to the transport system. In Acinetobacter baylyi (strain ATCC 33305 / BD413 / ADP1), this protein is Sulfate/thiosulfate import ATP-binding protein CysA.